The chain runs to 81 residues: uncharacterized protein (81 aa).

This is an uncharacterized protein from Homo sapiens (Human).